The sequence spans 475 residues: Ataxin-10 (475 aa).

Omega-N-methylarginine is present on Arg10. Phosphoserine is present on residues Ser12 and Ser77. The residue at position 82 (Thr82) is a Phosphothreonine. Position 430 is a phosphoserine (Ser430).

The protein belongs to the ataxin-10 family. Homooligomer. Interacts with GNB2. Interacts with IQCB1. Interacts with OGT. Post-translationally, polyubiquitinated. In terms of processing, phosphorylation at Ser-12 by AURKB promotes the association of ATXN10 with PLK1. Phosphorylation at Ser-77 and Thr-82 by PLK1 may play a role in the regulation of cytokinesis and may stimulate the proteasome-mediated degradation of ATXN10. As to expression, ubiquitous distribution. Markedly increased expression in testis, adrenals, and brain.

Its subcellular location is the cytoplasm. The protein resides in the perinuclear region. It localises to the midbody. It is found in the cytoskeleton. The protein localises to the cilium basal body. Its subcellular location is the microtubule organizing center. The protein resides in the centrosome. It localises to the centriole. May play a role in the regulation of cytokinesis. May play a role in signaling by stimulating protein glycosylation. Induces neuritogenesis by activating the Ras-MAP kinase pathway and is necessary for the survival of cerebellar neurons. Does not appear to play a major role in ciliogenesis. This Rattus norvegicus (Rat) protein is Ataxin-10 (Atxn10).